Consider the following 348-residue polypeptide: NADH-quinone oxidoreductase subunit H (348 aa).

8 consecutive transmembrane segments (helical) span residues 21–41 (IAGI…VIYV), 87–107 (GIFL…WAVI), 120–140 (VGLL…VMAG), 166–186 (IGFI…SEIV), 195–215 (GIVN…LFFI), 258–278 (NILL…LPPI), 288–308 (GFLW…WIWA), and 325–345 (VFLP…MATG).

It belongs to the complex I subunit 1 family. In terms of assembly, NDH-1 is composed of 14 different subunits. Subunits NuoA, H, J, K, L, M, N constitute the membrane sector of the complex.

The protein resides in the cell inner membrane. The catalysed reaction is a quinone + NADH + 5 H(+)(in) = a quinol + NAD(+) + 4 H(+)(out). Its function is as follows. NDH-1 shuttles electrons from NADH, via FMN and iron-sulfur (Fe-S) centers, to quinones in the respiratory chain. The immediate electron acceptor for the enzyme in this species is believed to be ubiquinone. Couples the redox reaction to proton translocation (for every two electrons transferred, four hydrogen ions are translocated across the cytoplasmic membrane), and thus conserves the redox energy in a proton gradient. This subunit may bind ubiquinone. The chain is NADH-quinone oxidoreductase subunit H from Erythrobacter litoralis (strain HTCC2594).